A 275-amino-acid polypeptide reads, in one-letter code: Increased recombination centers protein 6 (275 aa).

The protein belongs to the IRC6 family.

Involved in gross chromosomal rearrangements (GCRs) and telomere healing. The sequence is that of Increased recombination centers protein 6 (IRC6) from Candida dubliniensis (strain CD36 / ATCC MYA-646 / CBS 7987 / NCPF 3949 / NRRL Y-17841) (Yeast).